Reading from the N-terminus, the 103-residue chain is MYAIIETGGKQYKVQEGDVLKVEKLKADVDSVVKIDKVLAISSDDGFVVGKPYVDGAYVEAKVLEHAKDKKIIVFTYKSKTGYHRKLGHRQWYTKIQITKIAK.

The protein belongs to the bacterial ribosomal protein bL21 family. As to quaternary structure, part of the 50S ribosomal subunit. Contacts protein L20.

Functionally, this protein binds to 23S rRNA in the presence of protein L20. The polypeptide is Large ribosomal subunit protein bL21 (Caldicellulosiruptor saccharolyticus (strain ATCC 43494 / DSM 8903 / Tp8T 6331)).